We begin with the raw amino-acid sequence, 132 residues long: UPF0299 membrane protein YohJ (132 aa).

4 consecutive transmembrane segments (helical) span residues 7–27, 31–51, 63–83, and 93–113; these read IIWQ…AGIF, LLPV…VLLA, GCYV…VGVM, and FGPV…VVSW.

Belongs to the UPF0299 family.

It localises to the cell inner membrane. The polypeptide is UPF0299 membrane protein YohJ (Shigella boydii serotype 18 (strain CDC 3083-94 / BS512)).